The chain runs to 350 residues: MPGPAAGSRARVYAEVNSLRSREYWDYEAHVPSWGNQDDYQLVRKLGRGKYSEVFEAINITNNERVVVKILKPVKKKKIKREVKILENLRGGTNIIKLIDTVKDPVSKTPALVFEYINNTDFKQLYQILTDFDIRFYMYELLKALDYCHSKGIMHRDVKPHNVMIDHQQKKLRLIDWGLAEFYHPAQEYNVRVASRYFKGPELLVDYQMYDYSLDMWSLGCMLASMIFRKEPFFHGQDNYDQLVRIAKVLGTDELYGYLKKYHIDLDPHFNDILGQHSRKRWENFIHSENRHLVSPEALDLLDKLLRYDHQQRLTAKEAMEHPYFYPVVKEQSQPCAENTVLSSGLTAAR.

Phosphotyrosine is present on tyrosine 13. Residues serine 18 and serine 21 each carry the phosphoserine modification. The Protein kinase domain maps to 40–325 (YQLVRKLGRG…AKEAMEHPYF (286 aa)). ATP-binding positions include 46–54 (LGRGKYSEV) and lysine 69. At lysine 97 the chain carries N6-acetyllysine. The active-site Proton acceptor is the aspartate 157. Position 288 is a phosphoserine (serine 288).

The protein belongs to the protein kinase superfamily. Ser/Thr protein kinase family. CK2 subfamily. In terms of assembly, heterotetramer composed of two catalytic subunits (alpha chain and/or alpha' chain) and two regulatory subunits (beta chains). The tetramer can exist as a combination of 2 alpha/2 beta, 2 alpha'/2 beta or 1 alpha/1 alpha'/2 beta subunits. Also part of a CK2-SPT16-SSRP1 complex composed of SSRP1, SUPT16H, CSNK2A1, CSNK2A2 and CSNK2B, which forms following UV irradiation. Interacts with RNPS1. Interacts with CSNK2A2IP (via C-terminus). Interacts with SIRT6; preventing CSNK2A2 localization to the nucleus. Interacts with HIRIP3. As to expression, highly expressed in brain, testis and mature epididymal spermatozoa. Weakly expressed in kidney, liver, lung, spleen and thymus (at protein level).

The protein localises to the nucleus. The protein resides in the cytoplasm. The enzyme catalyses L-seryl-[protein] + ATP = O-phospho-L-seryl-[protein] + ADP + H(+). It catalyses the reaction L-threonyl-[protein] + ATP = O-phospho-L-threonyl-[protein] + ADP + H(+). Constitutively active protein kinase whose activity is not directly affected by phosphorylation. Seems to be regulated by level of expression and localization. Its function is as follows. Catalytic subunit of a constitutively active serine/threonine-protein kinase complex that phosphorylates a large number of substrates containing acidic residues C-terminal to the phosphorylated serine or threonine. Regulates numerous cellular processes, such as cell cycle progression, apoptosis and transcription, as well as viral infection. May act as a regulatory node which integrates and coordinates numerous signals leading to an appropriate cellular response. During mitosis, functions as a component of the p53/TP53-dependent spindle assembly checkpoint (SAC) that maintains cyclin-B-CDK1 activity and G2 arrest in response to spindle damage. Also required for p53/TP53-mediated apoptosis, phosphorylating 'Ser-392' of p53/TP53 following UV irradiation. Phosphorylates a number of DNA repair proteins in response to DNA damage, such as MDC1, RAD9A, RAD51 and HTATSF1, promoting their recruitment to DNA damage sites. Can also negatively regulate apoptosis. Phosphorylates the caspases CASP9 and CASP2 and the apoptotic regulator NOL3. Phosphorylation protects CASP9 from cleavage and activation by CASP8, and inhibits the dimerization of CASP2 and activation of CASP8. Regulates transcription by direct phosphorylation of RNA polymerases I, II, III and IV. Also phosphorylates and regulates numerous transcription factors including NF-kappa-B, STAT1, CREB1, IRF1, IRF2, ATF1, SRF, MAX, JUN, FOS, MYC and MYB. Phosphorylates Hsp90 and its co-chaperones FKBP4 and CDC37, which is essential for chaperone function. Regulates Wnt signaling by phosphorylating CTNNB1 and the transcription factor LEF1. Acts as an ectokinase that phosphorylates several extracellular proteins. May phosphorylate histone H2A on 'Ser-1'. This Mus musculus (Mouse) protein is Casein kinase II subunit alpha' (Csnk2a2).